The primary structure comprises 301 residues: 3-dehydroquinate dehydratase (301 aa).

The tract at residues Met1–Ile221 is 3-dehydroquinate dehydratase. 3-dehydroquinate is bound by residues Glu32 to Arg34 and Arg63. His119 functions as the Proton donor/acceptor in the catalytic mechanism. Lys145 (schiff-base intermediate with substrate) is an active-site residue. Residues Arg183, Thr202, and Gln206 each contribute to the 3-dehydroquinate site. The Chorismate mutase domain occupies Thr222–Ala301.

It belongs to the type-I 3-dehydroquinase family. Homodimer.

The catalysed reaction is 3-dehydroquinate = 3-dehydroshikimate + H2O. Its pathway is metabolic intermediate biosynthesis; chorismate biosynthesis; chorismate from D-erythrose 4-phosphate and phosphoenolpyruvate: step 3/7. Its function is as follows. Involved in the third step of the chorismate pathway, which leads to the biosynthesis of aromatic amino acids. Catalyzes the cis-dehydration of 3-dehydroquinate (DHQ) and introduces the first double bond of the aromatic ring to yield 3-dehydroshikimate. This is 3-dehydroquinate dehydratase from Pyrobaculum aerophilum (strain ATCC 51768 / DSM 7523 / JCM 9630 / CIP 104966 / NBRC 100827 / IM2).